The primary structure comprises 291 residues: Cell division protein ZipA (291 aa).

Residues 1 to 5 (MQELR) lie on the Periplasmic side of the membrane. The helical transmembrane segment at 6–26 (FVLIIVGALAIAALLFHGLWT) threads the bilayer. Topologically, residues 27 to 291 (SKKEGKSKFG…QEFKVRAAQA (265 aa)) are cytoplasmic. Residues 29-51 (KEGKSKFGDKPLRKMKVESDDPP) show a composition bias toward basic and acidic residues. Disordered regions lie at residues 29-61 (KEGK…EDDF) and 92-119 (ELDE…VQPQ).

The protein belongs to the ZipA family. As to quaternary structure, interacts with FtsZ via their C-terminal domains.

The protein localises to the cell inner membrane. In terms of biological role, essential cell division protein that stabilizes the FtsZ protofilaments by cross-linking them and that serves as a cytoplasmic membrane anchor for the Z ring. Also required for the recruitment to the septal ring of downstream cell division proteins. In Vibrio cholerae serotype O1 (strain ATCC 39541 / Classical Ogawa 395 / O395), this protein is Cell division protein ZipA.